The primary structure comprises 177 residues: Large ribosomal subunit protein uL6 (177 aa).

The protein belongs to the universal ribosomal protein uL6 family. As to quaternary structure, part of the 50S ribosomal subunit.

In terms of biological role, this protein binds to the 23S rRNA, and is important in its secondary structure. It is located near the subunit interface in the base of the L7/L12 stalk, and near the tRNA binding site of the peptidyltransferase center. In Chelativorans sp. (strain BNC1), this protein is Large ribosomal subunit protein uL6.